We begin with the raw amino-acid sequence, 358 residues long: uncharacterized protein (358 aa).

This is an uncharacterized protein from Klebsiella pneumoniae.